The chain runs to 422 residues: Protein krasavietz (422 aa).

Positions 1-26 (MSQKTERPVLSGQRIKTRKRDEREKY) are disordered. Residues 244–415 (KLHKAQASQE…QSAEEESESE (172 aa)) enclose the W2 domain. Phosphoserine is present on residues S407, S412, and S414.

Belongs to the BZW family. As to expression, expressed in mushroom bodies.

In terms of biological role, may be involved in memory formation. The sequence is that of Protein krasavietz (kra) from Drosophila melanogaster (Fruit fly).